The sequence spans 1733 residues: Gag-Pol polyprotein (1733 aa).

Residue G2 is the site of N-myristoyl glycine; by host attachment. Over residues L108–Q121 the composition is skewed to pro residues. Disordered stretches follow at residues L108–G218, K449–H469, and W511–I550. Residues P109 to P112 carry the PTAP/PSAP motif motif. Positions L128 to L132 match the LYPX(n)L motif motif. A PPXY motif motif is present at residues P161–Y164. Residue S190 is modified to Phosphoserine; by host. The stretch at E436–L476 forms a coiled coil. Positions K449 to R464 are enriched in basic and acidic residues. A CCHC-type zinc finger spans residues D500–K517. The segment covering R526 to G535 has biased composition (low complexity). In terms of domain architecture, Peptidase A2 spans V559–L629. Catalysis depends on D564, which acts as the Protease; shared with dimeric partner. 4 residues coordinate RNA: Y721, D771, R773, and P787. Positions L739–L930 constitute a Reverse transcriptase domain. Mg(2+) is bound at residue D807. The RNA site is built by N851 and P853. 2 residues coordinate Mg(2+): D881 and D882. DNA contacts are provided by R941, R955, R958, and F966. K1054 and K1055 together coordinate RNA. W1063 contacts DNA. K1082 contributes to the RNA binding site. Position 1113 (R1113) interacts with DNA. The region spanning P1172–M1318 is the RNase H type-1 domain. Residue D1181 coordinates Mg(2+). S1184 and L1186 together coordinate RNA. Residues Q1187, S1214, and Q1216 each contribute to the DNA site. 2 residues coordinate Mg(2+): E1219 and D1240. Residues R1242 and R1266 each contribute to the RNA site. Mg(2+)-binding residues include D1310, D1453, and D1512. Residues R1442–P1600 form the Integrase catalytic domain.

In terms of assembly, homohexamer. Further associates as homomultimer. The virus core is composed of a lattice formed from hexagonal rings, each containing six capsid monomers. As to quaternary structure, homodimer. The protease is a homodimer, whose active site consists of two apposed aspartic acid residues. The reverse transcriptase is a monomer. Mg(2+) serves as cofactor. It depends on Mn(2+) as a cofactor. Post-translationally, specific enzymatic cleavages by the viral protease yield mature proteins. The protease is released by autocatalytic cleavage. The polyprotein is cleaved during and after budding, this process is termed maturation. In terms of processing, sumoylated. Required for virus replication. Phosphorylated on serine residues.

It is found in the host cell membrane. The protein resides in the virion. The catalysed reaction is DNA(n) + a 2'-deoxyribonucleoside 5'-triphosphate = DNA(n+1) + diphosphate. The enzyme catalyses Endonucleolytic cleavage to 5'-phosphomonoester.. In terms of biological role, plays a role in budding and is processed by the viral protease during virion maturation outside the cell. During budding, it recruits, in a PPXY-dependent or independent manner, Nedd4-like ubiquitin ligases that conjugate ubiquitin molecules to Gag, or to Gag binding host factors. Interaction with HECT ubiquitin ligases probably link the viral protein to the host ESCRT pathway and facilitate release. Its function is as follows. Targets Gag and gag-pol polyproteins to the plasma membrane via a multipartite membrane binding signal, that includes its myristoylated N-terminus. Also mediates nuclear localization of the pre-integration complex. Functionally, forms the spherical core of the virion that encapsulates the genomic RNA-nucleocapsid complex. Involved in the packaging and encapsidation of two copies of the genome. Binds with high affinity to conserved UCUG elements within the packaging signal, located near the 5'-end of the genome. This binding is dependent on genome dimerization. In terms of biological role, the aspartyl protease mediates proteolytic cleavages of Gag and Gag-Pol polyproteins during or shortly after the release of the virion from the plasma membrane. Cleavages take place as an ordered, step-wise cascade to yield mature proteins. This process is called maturation. Displays maximal activity during the budding process just prior to particle release from the cell. Its function is as follows. Multifunctional enzyme that converts the viral dimeric RNA genome into dsDNA in the cytoplasm, shortly after virus entry into the cell. This enzyme displays a DNA polymerase activity that can copy either DNA or RNA templates, and a ribonuclease H (RNase H) activity that cleaves the RNA strand of RNA-DNA heteroduplexes in a partially processive 3' to 5' endonucleasic mode. Conversion of viral genomic RNA into dsDNA requires many steps. A tRNA binds to the primer-binding site (PBS) situated at the 5' end of the viral RNA. RT uses the 3' end of the tRNA primer to perform a short round of RNA-dependent minus-strand DNA synthesis. The reading proceeds through the U5 region and ends after the repeated (R) region which is present at both ends of viral RNA. The portion of the RNA-DNA heteroduplex is digested by the RNase H, resulting in a ssDNA product attached to the tRNA primer. This ssDNA/tRNA hybridizes with the identical R region situated at the 3' end of viral RNA. This template exchange, known as minus-strand DNA strong stop transfer, can be either intra- or intermolecular. RT uses the 3' end of this newly synthesized short ssDNA to perform the RNA-dependent minus-strand DNA synthesis of the whole template. RNase H digests the RNA template except for a polypurine tract (PPT) situated at the 5' end of the genome. It is not clear if both polymerase and RNase H activities are simultaneous. RNase H probably can proceed both in a polymerase-dependent (RNA cut into small fragments by the same RT performing DNA synthesis) and a polymerase-independent mode (cleavage of remaining RNA fragments by free RTs). Secondly, RT performs DNA-directed plus-strand DNA synthesis using the PPT that has not been removed by RNase H as primers. PPT and tRNA primers are then removed by RNase H. The 3' and 5' ssDNA PBS regions hybridize to form a circular dsDNA intermediate. Strand displacement synthesis by RT to the PBS and PPT ends produces a blunt ended, linear dsDNA copy of the viral genome that includes long terminal repeats (LTRs) at both ends. Functionally, catalyzes viral DNA integration into the host chromosome, by performing a series of DNA cutting and joining reactions. This enzyme activity takes place after virion entry into a cell and reverse transcription of the RNA genome in dsDNA. The first step in the integration process is 3' processing. This step requires a complex comprising the viral genome, matrix protein and integrase. This complex is called the pre-integration complex (PIC). The integrase protein removes 2 nucleotides from each 3' end of the viral DNA, leaving recessed CA OH's at the 3' ends. In the second step that requires cell division, the PIC enters cell nucleus. In the third step, termed strand transfer, the integrase protein joins the previously processed 3' ends to the 5' ends of strands of target cellular DNA at the site of integration. The last step is viral DNA integration into host chromosome. The protein is Gag-Pol polyprotein (gag-pol) of Homo sapiens (Human).